The chain runs to 257 residues: Electron transfer flavoprotein subunit beta (257 aa).

The protein belongs to the ETF beta-subunit/FixA family. In terms of assembly, heterodimer of an alpha and a beta subunit. FAD serves as cofactor. AMP is required as a cofactor.

Its function is as follows. The electron transfer flavoprotein serves as a specific electron acceptor for other dehydrogenases. It transfers the electrons to the main respiratory chain via ETF-ubiquinone oxidoreductase (ETF dehydrogenase). The sequence is that of Electron transfer flavoprotein subunit beta (etfB) from Bacillus subtilis (strain 168).